Reading from the N-terminus, the 474-residue chain is tRNA (guanine(37)-N(1))-methyltransferase (474 aa).

Residues H234, 274–275 (DL), 303–304 (DA), and N345 each bind S-adenosyl-L-methionine. The span at 452–464 (EPEAQCESEEAEE) shows a compositional bias: acidic residues. The disordered stretch occupies residues 452 to 474 (EPEAQCESEEAEEPSSKRIKVDT). A compositionally biased stretch (basic and acidic residues) spans 465–474 (PSSKRIKVDT).

It belongs to the class I-like SAM-binding methyltransferase superfamily. TRM5/TYW2 family. As to quaternary structure, monomer.

It is found in the mitochondrion matrix. The protein localises to the nucleus. It localises to the cytoplasm. It carries out the reaction guanosine(37) in tRNA + S-adenosyl-L-methionine = N(1)-methylguanosine(37) in tRNA + S-adenosyl-L-homocysteine + H(+). Its function is as follows. Specifically methylates the N1 position of guanosine-37 in various cytoplasmic and mitochondrial tRNAs. Methylation is not dependent on the nature of the nucleoside 5' of the target nucleoside. This is the first step in the biosynthesis of wybutosine (yW), a modified base adjacent to the anticodon of tRNAs and required for accurate decoding. This Caenorhabditis elegans protein is tRNA (guanine(37)-N(1))-methyltransferase.